The primary structure comprises 619 residues: TOX high mobility group box family member 4 (619 aa).

2 disordered regions span residues 155–227 (LSLG…QKPV) and 306–335 (DPVP…TESP). The residue at position 176 (Thr176) is a Phosphothreonine. Ser178 and Ser182 each carry phosphoserine. Over residues 183–193 (LHEDGVDDFRR) the composition is skewed to basic and acidic residues. Residues 208 to 218 (KQKAPKKRKKK) show a composition bias toward basic residues. The Nuclear localization signal signature appears at 213–218 (KKRKKK). Residues 223–291 (PQKPVSAYAL…EYLKALAAYK (69 aa)) constitute a DNA-binding region (HMG box). Thr313 carries the post-translational modification Phosphothreonine. At Ser315 the chain carries Phosphoserine. Positions 320–335 (TAADPASPAPASTESP) are enriched in low complexity. Arg479 carries the post-translational modification Asymmetric dimethylarginine. Residues Ser531, Ser548, Ser550, Ser558, Ser560, and Ser565 each carry the phosphoserine modification.

Component of the PNUTS-PP1 phosphatase complex, composed of PPP1R10/PNUTS, TOX4, WDR82 and PPP1CA or PPP1CB or PPP1CC. Interacts with PPP1R10/PNUTS. Interacts with FOXO1 and CREB1 (increased by cAMP); FOXO1 and CREB1 are required for full induction of TOX4-dependent activity and the interactions are inhibited by insulin.

The protein localises to the nucleus. It is found in the chromosome. With respect to regulation, in liver, recruited to target gene promoters following treatment with dexamethasone and cAMP. Binding is decreased in presence of insulin. Its function is as follows. Transcription factor that modulates cell fate reprogramming from the somatic state to the pluripotent and neuronal fate. In liver, controls the expression of hormone-regulated gluconeogenic genes such as G6PC1 and PCK1. This regulation is independent of the insulin receptor activation. Also acts as a regulatory component of protein phosphatase 1 (PP1) complexes. Component of the PNUTS-PP1 protein phosphatase complex, a PP1 complex that regulates RNA polymerase II transcription pause-release. PNUTS-PP1 also plays a role in the control of chromatin structure and cell cycle progression during the transition from mitosis into interphase. The chain is TOX high mobility group box family member 4 from Mus musculus (Mouse).